Here is an 854-residue protein sequence, read N- to C-terminus: Transcription factor asR3 (854 aa).

The zn(2)-C6 fungal-type DNA-binding region spans 19 to 45; it reads CWECRRRKIKCDRNDPCAHCIRHETQC. Positions 56–156 are disordered; sequence TDSDVSRTRP…SLSTNTSPSA (101 aa). Polar residues-rich tracts occupy residues 78–90 and 125–145; these read ASGS…TRPS and LNPS…SSRG. Positions 146 to 156 are enriched in low complexity; sequence PSLSTNTSPSA.

The protein resides in the nucleus. Functionally, transcription factor; part of the gene cluster that mediates the biosynthesis of xenovulene A, an unusual meroterpenoid that has potent inhibitory effects on the human gamma-aminobutyrate A (GABAA) benzodiazepine receptor. In Sarocladium schorii (Acremonium strictum (strain IMI 501407)), this protein is Transcription factor asR3.